A 452-amino-acid polypeptide reads, in one-letter code: Xaa-Pro dipeptidase 1 (452 aa).

The Mn(2+) site is built by Asp247, Asp258, His338, Glu383, and Glu422.

The protein belongs to the peptidase M24B family. Bacterial-type prolidase subfamily. The cofactor is Mn(2+).

The enzyme catalyses Xaa-L-Pro dipeptide + H2O = an L-alpha-amino acid + L-proline. In terms of biological role, splits dipeptides with a prolyl residue in the C-terminal position. This chain is Xaa-Pro dipeptidase 1, found in Idiomarina loihiensis (strain ATCC BAA-735 / DSM 15497 / L2-TR).